The chain runs to 139 residues: ATP synthase epsilon chain (139 aa).

This sequence belongs to the ATPase epsilon chain family. F-type ATPases have 2 components, CF(1) - the catalytic core - and CF(0) - the membrane proton channel. CF(1) has five subunits: alpha(3), beta(3), gamma(1), delta(1), epsilon(1). CF(0) has three main subunits: a, b and c.

The protein localises to the cell inner membrane. Produces ATP from ADP in the presence of a proton gradient across the membrane. In Erwinia tasmaniensis (strain DSM 17950 / CFBP 7177 / CIP 109463 / NCPPB 4357 / Et1/99), this protein is ATP synthase epsilon chain.